Here is a 966-residue protein sequence, read N- to C-terminus: Protein mes-1 (966 aa).

An N-terminal signal peptide occupies residues 1–19 (MKIHHFLTLLCTFLPLTTT). Residues 20-470 (ALTNSTPLSL…QASDIPTSVE (451 aa)) lie on the Extracellular side of the membrane. Asn-62, Asn-126, Asn-183, Asn-214, Asn-251, and Asn-372 each carry an N-linked (GlcNAc...) asparagine glycan. A helical transmembrane segment spans residues 471-491 (LMAVVLATSAIFALIALFLLY). Residues 492 to 966 (RKRKRDKKAR…FKSVNVAATV (475 aa)) are Cytoplasmic-facing. The Protein kinase domain maps to 656–966 (HNFNERIEKQ…FKSVNVAATV (311 aa)). ATP contacts are provided by residues 662–670 (IEKQAYWLM) and Lys-685.

It belongs to the protein kinase superfamily.

The protein resides in the cell membrane. In terms of biological role, during early embryogenesis, controls asymmetric cell division and the asymmetric localization of P granules of germline precursor P2 and its descendant P3. Probably upstream of tyrosine kinase src-1, plays a role in endoderm development by controlling spindle orientation during EMS blastomere cell division. Controls EMS spindle orientation probably by promoting lin-5 and gpr-1/2 enrichment at, and let-99 exclusion from the junction between P2 and EMS cells. The protein is Protein mes-1 of Caenorhabditis elegans.